Consider the following 1812-residue polypeptide: Putative surface cell antigen sca2 (1812 aa).

The N-terminal stretch at 1–17 is a signal peptide; the sequence is MSTCLLTSSFLSTSARA. Polar residues-rich tracts occupy residues 344-357 and 371-382; these read FLNNNDTTKPSTGR and MSNQSIHNTGTS. 3 disordered regions span residues 344-382, 648-691, and 1338-1462; these read FLNNNDTTKPSTGRSQKKSGSKNDHWYMSNQSIHNTGTS, LEQT…QGFS, and KQEN…KKDV. Positions 656-685 are enriched in pro residues; the sequence is PNPPPLPLNGGIPNPPPLPLNGSMPPPPPL. Basic and acidic residues-rich tracts occupy residues 1349–1367 and 1382–1393; these read STKDDTQPEDSNKKSEQSD and SKNDKSSDDKKS. Residues 1401–1416 are compositionally biased toward acidic residues; sequence DEDDTGYATDEEELEE. A compositionally biased stretch (low complexity) spans 1417 to 1455; the sequence is SNSTTNEELEESNSTTNEELEESNSTTNEELEESNSTTN. Residues 1533 to 1812 enclose the Autotransporter domain; that stretch reads ETSINRGVWI…QGLIKLKVNL (280 aa).

The protein resides in the cell outer membrane. The protein is Putative surface cell antigen sca2 (sca2) of Rickettsia sibirica (strain ATCC VR-151 / 246).